We begin with the raw amino-acid sequence, 729 residues long: Sodium-dependent neutral amino acid transporter B(0)AT2 (729 aa).

Topologically, residues 1-69 (MPKNSKVVKR…ARPAWNSKLQ (69 aa)) are cytoplasmic. 2 positions are modified to phosphoserine: serine 25 and serine 55. Helical transmembrane passes span 70-90 (YILAQVGFSVGLGNVWRFPYL), 98-117 (AYLLPYLILLLVIGIPLFFL), and 142-162 (GIGFASCVVCFFVALYYNVII). Residues 163–225 (GWSLFYFSQS…TSISESGGLN (63 aa)) are Extracellular-facing. Asparagine 187 and asparagine 213 each carry an N-linked (GlcNAc...) asparagine glycan. Transmembrane regions (helical) follow at residues 226–244 (WKMTICLLAAWVVVCLAMI), 253–270 (IMYFSSLFPYVVLICFLI), 306–323 (VFFALGLGFGGVIAFSSY), and 335–356 (VLVSFINFFTSILATLVVFAVL). Topologically, residues 357–452 (GFKANVINEK…FIAFTEAMTH (96 aa)) are extracellular. Asparagine 383 and asparagine 394 each carry an N-linked (GlcNAc...) asparagine glycan. 5 helical membrane-spanning segments follow: residues 453-472 (FPASPFWSVMFFLMLVNLGL), 496-514 (ILTVICCLLAFCIGLIFVQ), 530-550 (TLPLLIVVILENIAVSFVYGI), 571-592 (YMWKYISPLMLLSLLIASIVNM), and 620-642 (VICISLMVLAILPIPVVFIIRRC). Over 643–729 (NLIDDSSGNL…DMPDMPESDL (87 aa)) the chain is Cytoplasmic. A phosphoserine mark is found at serine 687, serine 699, and serine 701.

The protein belongs to the sodium:neurotransmitter symporter (SNF) (TC 2.A.22) family. SLC6A15 subfamily.

It is found in the membrane. It carries out the reaction L-leucine(in) + Na(+)(in) = L-leucine(out) + Na(+)(out). The catalysed reaction is L-isoleucine(in) + Na(+)(in) = L-isoleucine(out) + Na(+)(out). The enzyme catalyses L-methionine(in) + Na(+)(in) = L-methionine(out) + Na(+)(out). It catalyses the reaction L-proline(in) + Na(+)(in) = L-proline(out) + Na(+)(out). It carries out the reaction L-alanine(in) + Na(+)(in) = L-alanine(out) + Na(+)(out). The catalysed reaction is L-asparagine(in) + Na(+)(in) = L-asparagine(out) + Na(+)(out). The enzyme catalyses L-valine(in) + Na(+)(in) = L-valine(out) + Na(+)(out). It catalyses the reaction L-cysteine(in) + Na(+)(in) = L-cysteine(out) + Na(+)(out). It carries out the reaction L-glutamine(in) + Na(+)(in) = L-glutamine(out) + Na(+)(out). The catalysed reaction is L-serine(in) + Na(+)(in) = L-serine(out) + Na(+)(out). The enzyme catalyses L-threonine(in) + Na(+)(in) = L-threonine(out) + Na(+)(out). It catalyses the reaction L-pipecolate(in) + Na(+)(in) = L-pipecolate(out) + Na(+)(out). It carries out the reaction L-phenylalanine(in) + Na(+)(in) = L-phenylalanine(out) + Na(+)(out). In terms of biological role, functions as a sodium-dependent neutral amino acid transporter. Exhibits preference for the branched-chain amino acids, particularly leucine, valine and isoleucine and methionine. Can also transport low-affinity substrates such as alanine, phenylalanine, glutamine and pipecolic acid. Mediates the saturable, pH-sensitive and electrogenic cotransport of proline and sodium ions with a stoichiometry of 1:1. May have a role as transporter for neurotransmitter precursors into neurons. In contrast to other members of the neurotransmitter transporter family, does not appear to be chloride-dependent. This Bos taurus (Bovine) protein is Sodium-dependent neutral amino acid transporter B(0)AT2 (SLC6A15).